A 128-amino-acid chain; its full sequence is Probable 4-amino-4-deoxy-L-arabinose-phosphoundecaprenol flippase subunit ArnF (128 aa).

Residues 1 to 2 are Cytoplasmic-facing; it reads MG. The chain crosses the membrane as a helical span at residues 3-23; sequence LMWGLFSVIIASAAQLSLGFA. At 24-35 the chain is on the periplasmic side; it reads ASHLPPMTHLWD. A helical membrane pass occupies residues 36-56; that stretch reads FIAALLAFGLDARILLLGLLG. The Cytoplasmic segment spans residues 57-76; sequence YLLSVFCWYKTLHKLALSKA. Residues 77-97 traverse the membrane as a helical segment; it reads YALLSMSYVLVWIASMILPGW. Residues 98–100 lie on the Periplasmic side of the membrane; sequence EGT. A helical transmembrane segment spans residues 101 to 121; sequence FSLKALLGVACIMSGLMLIFL. Residues 122 to 128 lie on the Cytoplasmic side of the membrane; it reads PTTKQRY.

Belongs to the ArnF family. In terms of assembly, heterodimer of ArnE and ArnF.

It is found in the cell inner membrane. The protein operates within bacterial outer membrane biogenesis; lipopolysaccharide biosynthesis. In terms of biological role, translocates 4-amino-4-deoxy-L-arabinose-phosphoundecaprenol (alpha-L-Ara4N-phosphoundecaprenol) from the cytoplasmic to the periplasmic side of the inner membrane. The protein is Probable 4-amino-4-deoxy-L-arabinose-phosphoundecaprenol flippase subunit ArnF of Escherichia coli O17:K52:H18 (strain UMN026 / ExPEC).